We begin with the raw amino-acid sequence, 212 residues long: Nascent polypeptide-associated complex subunit alpha-like protein 4 (212 aa).

The span at 25-35 (QKENDVVVEDV) shows a compositional bias: basic and acidic residues. Residues 25–74 (QKENDVVVEDVKDGDEDDDDVDDDDDEIADGAGENEASKQSRSEKKSRKA) are disordered. Residues 36-53 (KDGDEDDDDVDDDDDEIA) are compositionally biased toward acidic residues. The region spanning 65 to 130 (SRSEKKSRKA…AKIDDMSSQL (66 aa)) is the NAC-A/B domain. A UBA domain is found at 173–210 (VEAKDIDLVMTQAGVSRPKAVKALKESNGDIVSAIMEL).

This sequence belongs to the NAC-alpha family.

Its function is as follows. May promote appropriate targeting of ribosome-nascent polypeptide complexes. This is Nascent polypeptide-associated complex subunit alpha-like protein 4 from Arabidopsis thaliana (Mouse-ear cress).